The sequence spans 306 residues: Pantothenate kinase (306 aa).

91 to 98 (GSVAVGKS) contributes to the ATP binding site.

It belongs to the prokaryotic pantothenate kinase family.

It is found in the cytoplasm. It catalyses the reaction (R)-pantothenate + ATP = (R)-4'-phosphopantothenate + ADP + H(+). It functions in the pathway cofactor biosynthesis; coenzyme A biosynthesis; CoA from (R)-pantothenate: step 1/5. In Streptococcus pneumoniae (strain Hungary19A-6), this protein is Pantothenate kinase.